Consider the following 326-residue polypeptide: uncharacterized protein (326 aa).

3 Solcar repeats span residues 15-106 (EFLV…VRRV), 114-215 (ETHA…ATDF), and 234-322 (LKTW…SKAL). A run of 6 helical transmembrane segments spans residues 16-36 (FLVK…SVVA), 83-103 (TATL…YEQV), 120-140 (FLSG…LELI), 191-211 (FSVT…AYDL), 240-260 (LLCG…FEVC), and 294-314 (FFVG…TSFF).

It belongs to the mitochondrial carrier (TC 2.A.29) family.

It is found in the mitochondrion inner membrane. This is an uncharacterized protein from Schizosaccharomyces pombe (strain 972 / ATCC 24843) (Fission yeast).